Here is a 176-residue protein sequence, read N- to C-terminus: ATP-dependent protease subunit HslV (176 aa).

Threonine 2 is a catalytic residue. Glycine 157, cysteine 160, and threonine 163 together coordinate Na(+).

This sequence belongs to the peptidase T1B family. HslV subfamily. In terms of assembly, a double ring-shaped homohexamer of HslV is capped on each side by a ring-shaped HslU homohexamer. The assembly of the HslU/HslV complex is dependent on binding of ATP.

It localises to the cytoplasm. It carries out the reaction ATP-dependent cleavage of peptide bonds with broad specificity.. Its activity is regulated as follows. Allosterically activated by HslU binding. Functionally, protease subunit of a proteasome-like degradation complex believed to be a general protein degrading machinery. The chain is ATP-dependent protease subunit HslV from Pseudomonas syringae pv. tomato (strain ATCC BAA-871 / DC3000).